The primary structure comprises 466 residues: E3 SUMO-protein ligase TRIM60 (466 aa).

An RING-type zinc finger spans residues 15-56 (CYICSDFMEDPVTSRCGHNFCFACLRLLWDDLQGNIFCPVCQ). A B box-type zinc finger spans residues 91–132 (EEHTVCPKHDQPLVLFCVRDRDVLCTQCSLSVEHQGHYTCPI). Residues C96, H99, C118, and H124 each contribute to the Zn(2+) site. Residues 171–223 (LREEAQYQKIEIRYEIGQIKLFLQSEYEAHLNESHMEELRSFSELNGYLETLL) adopt a coiled-coil conformation. A B30.2/SPRY domain is found at 272–462 (LSLPAQYSGL…LEILTHPTPD (191 aa)).

It belongs to the TRIM/RBCC family.

In terms of biological role, E3 SUMO-protein ligase that mediates SUMOylation of TAB2 leading to inhibition of NF-kappa-B and MAPK pathways by suppressing the TRAF6/TAB2/TAK1 complex. The sequence is that of E3 SUMO-protein ligase TRIM60 (Trim60) from Mus musculus (Mouse).